The following is a 206-amino-acid chain: Small ribosomal subunit protein uS4 (206 aa).

Residues 96–156 (QRLDNVVYRM…EKAKKQARIV (61 aa)) form the S4 RNA-binding domain.

This sequence belongs to the universal ribosomal protein uS4 family. As to quaternary structure, part of the 30S ribosomal subunit. Contacts protein S5. The interaction surface between S4 and S5 is involved in control of translational fidelity.

In terms of biological role, one of the primary rRNA binding proteins, it binds directly to 16S rRNA where it nucleates assembly of the body of the 30S subunit. Its function is as follows. With S5 and S12 plays an important role in translational accuracy. The polypeptide is Small ribosomal subunit protein uS4 (Alteromonas mediterranea (strain DSM 17117 / CIP 110805 / LMG 28347 / Deep ecotype)).